A 195-amino-acid polypeptide reads, in one-letter code: ATP-dependent Clp protease proteolytic subunit (195 aa).

Serine 98 acts as the Nucleophile in catalysis. Residue histidine 123 is part of the active site.

The protein belongs to the peptidase S14 family. As to quaternary structure, fourteen ClpP subunits assemble into 2 heptameric rings which stack back to back to give a disk-like structure with a central cavity, resembling the structure of eukaryotic proteasomes.

It is found in the cytoplasm. It catalyses the reaction Hydrolysis of proteins to small peptides in the presence of ATP and magnesium. alpha-casein is the usual test substrate. In the absence of ATP, only oligopeptides shorter than five residues are hydrolyzed (such as succinyl-Leu-Tyr-|-NHMec, and Leu-Tyr-Leu-|-Tyr-Trp, in which cleavage of the -Tyr-|-Leu- and -Tyr-|-Trp bonds also occurs).. Cleaves peptides in various proteins in a process that requires ATP hydrolysis. Has a chymotrypsin-like activity. Plays a major role in the degradation of misfolded proteins. The sequence is that of ATP-dependent Clp protease proteolytic subunit from Staphylococcus aureus (strain Mu3 / ATCC 700698).